Here is a 158-residue protein sequence, read N- to C-terminus: 6,7-dimethyl-8-ribityllumazine synthase (158 aa).

5-amino-6-(D-ribitylamino)uracil-binding positions include Phe23, 61–63 (SFE), and 85–87 (AVI). 90–91 (ET) is a binding site for (2S)-2-hydroxy-3-oxobutyl phosphate. His93 functions as the Proton donor in the catalytic mechanism. Phe118 lines the 5-amino-6-(D-ribitylamino)uracil pocket. Position 132 (Arg132) interacts with (2S)-2-hydroxy-3-oxobutyl phosphate.

This sequence belongs to the DMRL synthase family.

It carries out the reaction (2S)-2-hydroxy-3-oxobutyl phosphate + 5-amino-6-(D-ribitylamino)uracil = 6,7-dimethyl-8-(1-D-ribityl)lumazine + phosphate + 2 H2O + H(+). Its pathway is cofactor biosynthesis; riboflavin biosynthesis; riboflavin from 2-hydroxy-3-oxobutyl phosphate and 5-amino-6-(D-ribitylamino)uracil: step 1/2. Functionally, catalyzes the formation of 6,7-dimethyl-8-ribityllumazine by condensation of 5-amino-6-(D-ribitylamino)uracil with 3,4-dihydroxy-2-butanone 4-phosphate. This is the penultimate step in the biosynthesis of riboflavin. The polypeptide is 6,7-dimethyl-8-ribityllumazine synthase (Prochlorococcus marinus (strain MIT 9215)).